A 163-amino-acid polypeptide reads, in one-letter code: Globin CTT-Z (163 aa).

Positions 1 to 16 are cleaved as a signal peptide; it reads MKFFAVLALCIVGAIA. Residues 18–162 form the Globin domain; sequence PLTSDEAALV…VYTAVFQIVT (145 aa). The heme b site is built by His-76 and His-111.

It belongs to the globin family.

In Chironomus thummi thummi (Midge), this protein is Globin CTT-Z (CTT-Z).